Reading from the N-terminus, the 75-residue chain is Small ribosomal subunit protein bS18 (75 aa).

The protein belongs to the bacterial ribosomal protein bS18 family. As to quaternary structure, part of the 30S ribosomal subunit. Forms a tight heterodimer with protein bS6.

In terms of biological role, binds as a heterodimer with protein bS6 to the central domain of the 16S rRNA, where it helps stabilize the platform of the 30S subunit. The chain is Small ribosomal subunit protein bS18 from Teredinibacter turnerae (strain ATCC 39867 / T7901).